Here is a 538-residue protein sequence, read N- to C-terminus: Putative outer membrane porin BglH (538 aa).

An N-terminal signal peptide occupies residues 1 to 25; sequence MFRRNIITSAILLMAPLAFSAQSLA.

Belongs to the porin LamB (TC 1.B.3) family.

It is found in the cell outer membrane. Its function is as follows. May be a sugar porin with a broad carbohydrate specificity. The polypeptide is Putative outer membrane porin BglH (bglH) (Escherichia coli O6:H1 (strain CFT073 / ATCC 700928 / UPEC)).